Here is a 23-residue protein sequence, read N- to C-terminus: Malate dehydrogenase (23 aa).

The protein belongs to the LDH/MDH superfamily. MDH type 2 family.

The catalysed reaction is (S)-malate + NAD(+) = oxaloacetate + NADH + H(+). Its function is as follows. Catalyzes the reversible oxidation of malate to oxaloacetate. This chain is Malate dehydrogenase (mdh), found in Thermoleophilum album.